A 222-amino-acid chain; its full sequence is Thiol:disulfide interchange protein DsbL (222 aa).

The signal sequence occupies residues 1 to 27 (MSKLGISSLFKTILLTAALAVSFTASA). Residues 28–221 (FTEGTDYMVL…MADLIRELAS (194 aa)) enclose the Thioredoxin domain. Cys56 and Cys59 are joined by a disulfide.

It belongs to the thioredoxin family. DsbL subfamily. Interacts with DsbI.

The protein resides in the periplasm. Involved in disulfide-bond formation. Acts by transferring its disulfide bond to other proteins. Part of a redox system composed of DsbI and DsbL that mediates formation of an essential disulfide bond in AssT. This is Thiol:disulfide interchange protein DsbL from Escherichia coli O6:H1 (strain CFT073 / ATCC 700928 / UPEC).